Here is a 467-residue protein sequence, read N- to C-terminus: H(+)/Cl(-) exchange transporter ClcA (467 aa).

At 1 to 30 (MTKRERIVKSVLAHVPKDAINQFVSRGSTP) the chain is on the cytoplasmic side. Residues 31–67 (FSVLIMAAIVGTLAGFVGTYFELAVHFVSETRTEWLR) traverse the membrane as a helical segment. Residues 68 to 74 (SEIGSVL) are Periplasmic-facing. A helical membrane pass occupies residues 75–98 (PLWLAAVLISALLAFIGYFLVHRF). The Selectivity filter part_1 motif lies at 104–108 (GSGIP). Serine 105 serves as a coordination point for chloride. The helical intramembrane region spans 107–114 (IPEIEGAM). Over 115 to 121 (DNIRPVR) the chain is Cytoplasmic. A run of 2 helical transmembrane segments spans residues 122 to 139 (WWRV…ALGS) and 146 to 164 (EGPT…TDIF). The short motif at 144 to 148 (GREGP) is the Selectivity filter part_2 element. Residues 165-174 (RVKDDDTRHS) are Cytoplasmic-facing. Intramembrane regions (helical) lie at residues 175 to 187 (LLAS…LAAA) and 191 to 199 (PLAGIMFVV). At 200-212 (EEMRPQFRYSLIS) the chain is on the cytoplasmic side. Residues 213–230 (IRAVIISAIMANIVFRAI) form a helical membrane-spanning segment. The Periplasmic portion of the chain corresponds to 231-250 (NGQDAVITMPQYQSPALQTL). A helical membrane pass occupies residues 251–279 (WLFLLLGALFGVFGVIFNKLITVAQDSFV). Topologically, residues 280–285 (AIHKND) are cytoplasmic. Residues 286–307 (RKRYLITGSILGGVFGLLLLYV) traverse the membrane as a helical segment. The Periplasmic segment spans residues 308 to 327 (PQLTGGGIALIPDVTTGNYS). Helical transmembrane passes span 328–347 (ISIL…LCFG) and 353–374 (GIFA…ASAD). The short motif at 353 to 357 (GIFAP) is the Selectivity filter part_3 element. The chloride site is built by isoleucine 354 and phenylalanine 355. Over 375 to 384 (VLLPTLDIEP) the chain is Periplasmic. Residues 385 to 399 (GVFAIAGMGALFAAT) constitute an intramembrane region (helical). Positions 400 to 402 (VRA) form an intramembrane region, note=Loop between two helices. The segment at residues 403–414 (PITGILLVIEMT) is an intramembrane region (helical). The segment at residues 415–419 (NNYYL) is an intramembrane region (note=Loop between two helices). Residues 420–436 (ILPLIITCLGAVIVAQL) traverse the membrane as a helical segment. Over 437 to 467 (LGGQPIYSQLLHRTLKNDKLRQQDLPENQAS) the chain is Cytoplasmic. Residue tyrosine 443 participates in chloride binding.

This sequence belongs to the chloride channel (TC 2.A.49) family. ClcA subfamily. Homodimer.

The protein localises to the cell inner membrane. The catalysed reaction is 2 chloride(in) + H(+)(out) = 2 chloride(out) + H(+)(in). Functionally, proton-coupled chloride transporter. Functions as antiport system and exchanges two chloride ions for 1 proton. Probably acts as an electrical shunt for an outwardly-directed proton pump that is linked to amino acid decarboxylation, as part of the extreme acid resistance (XAR) response. In Vibrio parahaemolyticus serotype O3:K6 (strain RIMD 2210633), this protein is H(+)/Cl(-) exchange transporter ClcA.